The following is a 412-amino-acid chain: Probable tRNA sulfurtransferase (412 aa).

Residues 1 to 22 (MPDIFTDNTDKQDSDPSRQGFE) are disordered. A THUMP domain is found at 82-190 (PRAAEAAADV…QNLAYVYLET (109 aa)). ATP-binding positions include 208-209 (LM), lysine 292, glycine 314, and glutamine 323.

Belongs to the ThiI family.

It localises to the cytoplasm. It catalyses the reaction [ThiI sulfur-carrier protein]-S-sulfanyl-L-cysteine + a uridine in tRNA + 2 reduced [2Fe-2S]-[ferredoxin] + ATP + H(+) = [ThiI sulfur-carrier protein]-L-cysteine + a 4-thiouridine in tRNA + 2 oxidized [2Fe-2S]-[ferredoxin] + AMP + diphosphate. The catalysed reaction is [ThiS sulfur-carrier protein]-C-terminal Gly-Gly-AMP + S-sulfanyl-L-cysteinyl-[cysteine desulfurase] + AH2 = [ThiS sulfur-carrier protein]-C-terminal-Gly-aminoethanethioate + L-cysteinyl-[cysteine desulfurase] + A + AMP + 2 H(+). The protein operates within cofactor biosynthesis; thiamine diphosphate biosynthesis. Functionally, catalyzes the ATP-dependent transfer of a sulfur to tRNA to produce 4-thiouridine in position 8 of tRNAs, which functions as a near-UV photosensor. Also catalyzes the transfer of sulfur to the sulfur carrier protein ThiS, forming ThiS-thiocarboxylate. This is a step in the synthesis of thiazole, in the thiamine biosynthesis pathway. The sulfur is donated as persulfide by IscS. This is Probable tRNA sulfurtransferase from Methanosarcina acetivorans (strain ATCC 35395 / DSM 2834 / JCM 12185 / C2A).